The chain runs to 833 residues: Phosphatidylinositol-3-phosphatase myotubularin-2 (833 aa).

The GRAM domain occupies G42–A109. The 467-residue stretch at T181 to H647 folds into the Myotubularin phosphatase domain. Residues N329 to K332, N354 to I355, C440 to R446, and R486 contribute to the substrate site. C440 acts as the Phosphocysteine intermediate in catalysis. The disordered stretch occupies residues Q503–S530. Over residues S504 to S530 the composition is skewed to low complexity. The stretch at E660–A717 forms a coiled coil. The tract at residues K753–E772 is disordered.

Belongs to the protein-tyrosine phosphatase family. Non-receptor class myotubularin subfamily. In terms of tissue distribution, mostly expressed in flowers and roots, and, to a lower extent, in siliques and leaves.

It is found in the cytoplasm. It carries out the reaction a 1,2-diacyl-sn-glycero-3-phospho-(1D-myo-inositol-3-phosphate) + H2O = a 1,2-diacyl-sn-glycero-3-phospho-(1D-myo-inositol) + phosphate. It catalyses the reaction a 1,2-diacyl-sn-glycero-3-phospho-(1D-myo-inositol-3,5-bisphosphate) + H2O = a 1,2-diacyl-sn-glycero-3-phospho-(1D-myo-inositol-5-phosphate) + phosphate. In terms of biological role, phosphatase with phosphoinositide 3'-phosphatase activity that can use phosphatidylinositol-3-phosphate (PtdIns3P) and phosphatidylinositol-3,5-diphosphate (PtdIns3,5P(2)) as substrates and produces phosphatidylinositol-5-phosphate (PtdIns5P); participates in pathway(s) that transfer gene regulatory signals to the nucleus. This is Phosphatidylinositol-3-phosphatase myotubularin-2 (MTM2) from Arabidopsis thaliana (Mouse-ear cress).